Consider the following 90-residue polypeptide: Small ribosomal subunit protein uS15c (90 aa).

This sequence belongs to the universal ribosomal protein uS15 family. As to quaternary structure, part of the 30S ribosomal subunit.

It localises to the plastid. The protein localises to the chloroplast. This chain is Small ribosomal subunit protein uS15c (rps15), found in Drimys granadensis.